Reading from the N-terminus, the 163-residue chain is MRDQQIIAAELENLGYTLVEIEREAGGLLRVTIENPDYERLISVLDCEKVSHQLSYALPVENIPYERLEISSPGLDRPVKSAADFERFTGMEVDLKLRVAAGNRKNFRGVLQGLLSGELNSPDAKFGLLFEGADGAESQLEFSLAEVDKTRLVPVIDFKGRKS.

Belongs to the RimP family.

It is found in the cytoplasm. Its function is as follows. Required for maturation of 30S ribosomal subunits. The sequence is that of Ribosome maturation factor RimP from Polynucleobacter asymbioticus (strain DSM 18221 / CIP 109841 / QLW-P1DMWA-1) (Polynucleobacter necessarius subsp. asymbioticus).